The sequence spans 452 residues: Bifunctional protein GlmU (452 aa).

The pyrophosphorylase stretch occupies residues 1–226 (MAFSVVVLAA…AVEVEGVNNR (226 aa)). UDP-N-acetyl-alpha-D-glucosamine contacts are provided by residues 8–11 (LAAG), lysine 22, glutamine 73, and 78–79 (GT). Aspartate 102 is a binding site for Mg(2+). Positions 137, 151, 166, and 224 each coordinate UDP-N-acetyl-alpha-D-glucosamine. A Mg(2+)-binding site is contributed by asparagine 224. Residues 227–247 (LQLANLERALQNRQADELMTN) are linker. Residues 248-452 (GVTLLDPSRF…IPNWPRPTKK (205 aa)) form an N-acetyltransferase region. The UDP-N-acetyl-alpha-D-glucosamine site is built by arginine 330 and lysine 348. Histidine 360 (proton acceptor) is an active-site residue. Residues tyrosine 363 and asparagine 374 each coordinate UDP-N-acetyl-alpha-D-glucosamine. Residues alanine 377, 383 to 384 (NY), serine 402, alanine 420, and arginine 437 each bind acetyl-CoA.

In the N-terminal section; belongs to the N-acetylglucosamine-1-phosphate uridyltransferase family. It in the C-terminal section; belongs to the transferase hexapeptide repeat family. Homotrimer. Mg(2+) serves as cofactor.

It localises to the cytoplasm. It carries out the reaction alpha-D-glucosamine 1-phosphate + acetyl-CoA = N-acetyl-alpha-D-glucosamine 1-phosphate + CoA + H(+). The catalysed reaction is N-acetyl-alpha-D-glucosamine 1-phosphate + UTP + H(+) = UDP-N-acetyl-alpha-D-glucosamine + diphosphate. It participates in nucleotide-sugar biosynthesis; UDP-N-acetyl-alpha-D-glucosamine biosynthesis; N-acetyl-alpha-D-glucosamine 1-phosphate from alpha-D-glucosamine 6-phosphate (route II): step 2/2. It functions in the pathway nucleotide-sugar biosynthesis; UDP-N-acetyl-alpha-D-glucosamine biosynthesis; UDP-N-acetyl-alpha-D-glucosamine from N-acetyl-alpha-D-glucosamine 1-phosphate: step 1/1. The protein operates within bacterial outer membrane biogenesis; LPS lipid A biosynthesis. Functionally, catalyzes the last two sequential reactions in the de novo biosynthetic pathway for UDP-N-acetylglucosamine (UDP-GlcNAc). The C-terminal domain catalyzes the transfer of acetyl group from acetyl coenzyme A to glucosamine-1-phosphate (GlcN-1-P) to produce N-acetylglucosamine-1-phosphate (GlcNAc-1-P), which is converted into UDP-GlcNAc by the transfer of uridine 5-monophosphate (from uridine 5-triphosphate), a reaction catalyzed by the N-terminal domain. The protein is Bifunctional protein GlmU of Alteromonas mediterranea (strain DSM 17117 / CIP 110805 / LMG 28347 / Deep ecotype).